Consider the following 394-residue polypeptide: Elongation factor Tu (394 aa).

Positions Lys10–Glu204 constitute a tr-type G domain. Residues Gly19–Thr26 are G1. Gly19 to Thr26 lines the GTP pocket. A Mg(2+)-binding site is contributed by Thr26. The G2 stretch occupies residues Gly60–Asn64. The segment at Asp81–Gly84 is G3. GTP contacts are provided by residues Asp81–His85 and Asn136–Asp139. The tract at residues Asn136–Asp139 is G4. Residues Ser174–Leu176 form a G5 region.

This sequence belongs to the TRAFAC class translation factor GTPase superfamily. Classic translation factor GTPase family. EF-Tu/EF-1A subfamily. As to quaternary structure, monomer.

Its subcellular location is the cytoplasm. It catalyses the reaction GTP + H2O = GDP + phosphate + H(+). In terms of biological role, GTP hydrolase that promotes the GTP-dependent binding of aminoacyl-tRNA to the A-site of ribosomes during protein biosynthesis. This is Elongation factor Tu from Staphylococcus aureus (strain COL).